Consider the following 29-residue polypeptide: Small toxic protein TisB (29 aa).

Residues 6–28 (IAILILKLIVAALQLLDAVLKYL) traverse the membrane as a helical segment.

Its subcellular location is the cell inner membrane. In terms of biological role, toxic component of a type I toxin-antitoxin (TA) system. Overexpression causes cessation of growth, induces stress-response, a number of membrane protein genes, and leads to cell death. Inhibits ATP synthesis, ATP levels drop drastically quickly after induction. Part of the programmed response to DNA damage; damage leads to increased accumulation of the protein which slows or stops bacterial growth, probably allowing DNA repair before cells continue to grow. This Escherichia coli (strain K12) protein is Small toxic protein TisB (tisB).